The sequence spans 380 residues: Ribosomal RNA small subunit methyltransferase, mitochondrial (380 aa).

A mitochondrion-targeting transit peptide spans 1-26; sequence MILRLKDQTLIKINSTRSYLSSLVFR. 6 residues coordinate S-adenosyl-L-methionine: His-70, Leu-72, Gly-97, Glu-118, Asp-146, and Asn-161.

The protein belongs to the class I-like SAM-binding methyltransferase superfamily. rRNA adenine N(6)-methyltransferase family.

Its subcellular location is the mitochondrion. The catalysed reaction is adenosine(1914)/adenosine(1915) in 18S rRNA + 4 S-adenosyl-L-methionine = N(6)-dimethyladenosine(1914)/N(6)-dimethyladenosine(1915) in 18S rRNA + 4 S-adenosyl-L-homocysteine + 4 H(+). Its function is as follows. N6-adenine methyltransferase which modifies the AA dinucleotide at the plant mitochondrial 18S rRNA nucleotides A1914 and A1915. Not active as mitochondrial transcription factor. This is Ribosomal RNA small subunit methyltransferase, mitochondrial from Arabidopsis thaliana (Mouse-ear cress).